The chain runs to 213 residues: AN1-type zinc finger protein 5 (213 aa).

The segment at 8–42 (TPGPMLCSTGCGFYGNPRTNGMCSVCYKEHLQRQQ) adopts an A20-type zinc-finger fold. 4 residues coordinate Zn(2+): Cys14, Cys18, Cys30, and Cys33. Positions 39–149 (QRQQNSGRMS…EEKAPELPKP (111 aa)) are disordered. Polar residues predominate over residues 40–75 (RQQNSGRMSPMGTASGSNSPTSDSASVQRADTSLNN). Ser48 and Ser58 each carry phosphoserine. Over residues 120–138 (SEPVVTQPSPSVSQPSTSQ) the composition is skewed to low complexity. Basic and acidic residues predominate over residues 139 to 148 (SEEKAPELPK). Residues 148 to 194 (KPKKNRCFMCRKKVGLTGFDCRCGNLFCGLHRYSDKHNCPYDYKAEA) form an AN1-type zinc finger. Cys154, Cys157, Cys168, Cys170, Cys175, His178, His184, and Cys186 together coordinate Zn(2+). Lys209 is subject to N6-acetyllysine.

In terms of assembly, interacts with ubiquitin and polyubiquitinated proteins. Identified in a heterotrimeric complex with ubiquitin and SQSTM1, where ZFAND5 and SQSTM1 both interact with the same ubiquitin molecule. Homooligomer and/or heterooligomer. Interacts (via A20-type domain) with IKBKG and RIPK1 and with TRAF6 (via AN1-type domain). In terms of tissue distribution, highly expressed in skeletal muscle. Expressed in fetal cochlea. Also expressed in infant brain, fetal heart, pancreatic islet, melanocyte, pineal gland, placenta, corneal stroma, and parathyroid tumor. Weakly expressed or undetectable in adult brain, heart, colon, thymus, spleen, kidney, liver, small intestine, placenta, lung and peripheral blood leukocytes. Expressed in rhabdomyosarcoma RD cells (at protein level).

Its subcellular location is the cytoplasm. Involved in protein degradation via the ubiquitin-proteasome system. May act by anchoring ubiquitinated proteins to the proteasome. Plays a role in ubiquitin-mediated protein degradation during muscle atrophy. Plays a role in the regulation of NF-kappa-B activation and apoptosis. Inhibits NF-kappa-B activation triggered by overexpression of RIPK1 and TRAF6 but not of RELA. Also inhibits tumor necrosis factor (TNF), IL-1 and TLR4-induced NF-kappa-B activation in a dose-dependent manner. Overexpression sensitizes cells to TNF-induced apoptosis. Is a potent inhibitory factor for osteoclast differentiation. In Homo sapiens (Human), this protein is AN1-type zinc finger protein 5 (ZFAND5).